A 121-amino-acid polypeptide reads, in one-letter code: MRKSYKQFYKAPRRHIQVWEAANGPIPKGYYIDHIDGNPLNDALDNLRLALPKENSWNMKTPKSNTSGLKGLSWSKEREMWRGTVTAEGKQHNFRSRDLLEVVAWIYRTRRELHGQFARFR.

The sequence is that of Protein 3.8 from Escherichia phage T7 (Bacteriophage T7).